A 161-amino-acid polypeptide reads, in one-letter code: Dihydrofolate reductase (161 aa).

Positions 1-160 (MTMVGLIWAQ…LRYRLYSYHR (160 aa)) constitute a DHFR domain. Substrate is bound at residue 7–9 (IWA). NADP(+) contacts are provided by residues 8–9 (WA) and 16–21 (IGRGGD). Substrate-binding residues include aspartate 29 and arginine 34. An NADP(+)-binding site is contributed by 45–48 (GRRT). Arginine 62 contributes to the substrate binding site. NADP(+)-binding positions include 67–70 (LSRQ), glycine 82, and 96–101 (IGGGQV). Residues tyrosine 102 and threonine 115 each contribute to the substrate site.

It belongs to the dihydrofolate reductase family.

The catalysed reaction is (6S)-5,6,7,8-tetrahydrofolate + NADP(+) = 7,8-dihydrofolate + NADPH + H(+). Its pathway is cofactor biosynthesis; tetrahydrofolate biosynthesis; 5,6,7,8-tetrahydrofolate from 7,8-dihydrofolate: step 1/1. In terms of biological role, key enzyme in folate metabolism. Catalyzes an essential reaction for de novo glycine and purine synthesis, and for DNA precursor synthesis. This chain is Dihydrofolate reductase (folA), found in Mycobacterium tuberculosis (strain CDC 1551 / Oshkosh).